A 282-amino-acid polypeptide reads, in one-letter code: 2-dehydro-3-deoxyphosphooctonate aldolase (282 aa).

It belongs to the KdsA family.

The protein localises to the cytoplasm. It carries out the reaction D-arabinose 5-phosphate + phosphoenolpyruvate + H2O = 3-deoxy-alpha-D-manno-2-octulosonate-8-phosphate + phosphate. The protein operates within carbohydrate biosynthesis; 3-deoxy-D-manno-octulosonate biosynthesis; 3-deoxy-D-manno-octulosonate from D-ribulose 5-phosphate: step 2/3. Its pathway is bacterial outer membrane biogenesis; lipopolysaccharide biosynthesis. In Granulibacter bethesdensis (strain ATCC BAA-1260 / CGDNIH1), this protein is 2-dehydro-3-deoxyphosphooctonate aldolase.